We begin with the raw amino-acid sequence, 620 residues long: Probable translation initiation factor IF-2 (620 aa).

Acidic residues predominate over residues M1–T10. Residues M1–D29 are disordered. Residues D11–D29 are compositionally biased toward low complexity. In terms of domain architecture, tr-type G spans L33 to M248. Residues G42 to T49 are G1. G42–T49 contacts GTP. The G2 stretch occupies residues A67 to H71. Residues D104–G107 are G3. GTP contacts are provided by residues D104 to H108 and N158 to D161. The tract at residues N158–D161 is G4. Polar residues predominate over residues T162–S183. The tract at residues T162–A185 is disordered. The tract at residues S226–I228 is G5.

Belongs to the TRAFAC class translation factor GTPase superfamily. Classic translation factor GTPase family. IF-2 subfamily.

In terms of biological role, function in general translation initiation by promoting the binding of the formylmethionine-tRNA to ribosomes. Seems to function along with eIF-2. In Haloquadratum walsbyi (strain DSM 16790 / HBSQ001), this protein is Probable translation initiation factor IF-2.